A 289-amino-acid chain; its full sequence is Enoyl-CoA delta isomerase 1, mitochondrial (289 aa).

The N-terminal 28 residues, 1–28, are a transit peptide targeting the mitochondrion; sequence MALAAARRVLLQAGSRLGRRGAVDGARR. An N6-acetyllysine; alternate modification is found at Lys48. Lys48 is modified (N6-succinyllysine; alternate). The residue at position 71 (Lys71) is an N6-succinyllysine. Lys76 carries the N6-acetyllysine modification. Residues 93–97, Gly140, and Asn164 contribute to the substrate site; that span reads AGLDL. 3 positions are modified to N6-acetyllysine; alternate: Lys222, Lys229, and Lys255. 3 positions are modified to N6-succinyllysine; alternate: Lys222, Lys229, and Lys255. Residue Lys275 is modified to N6-succinyllysine. Lys283 carries the post-translational modification N6-acetyllysine; alternate. Residue Lys283 is modified to N6-succinyllysine; alternate.

This sequence belongs to the enoyl-CoA hydratase/isomerase family. In terms of assembly, homotrimer.

The protein resides in the mitochondrion matrix. The catalysed reaction is a (3Z)-enoyl-CoA = a 4-saturated (2E)-enoyl-CoA. It carries out the reaction a (3E)-enoyl-CoA = a 4-saturated (2E)-enoyl-CoA. It catalyses the reaction (3Z)-octenoyl-CoA = (2E)-octenoyl-CoA. The enzyme catalyses (2E)-tetradecenoyl-CoA = (3Z)-tetradecenoyl-CoA. The catalysed reaction is (3Z)-dodecenoyl-CoA = (2E)-dodecenoyl-CoA. It carries out the reaction (3Z)-hexenoyl-CoA = (2E)-hexenoyl-CoA. It catalyses the reaction (3Z)-decenoyl-CoA = (2E)-decenoyl-CoA. The protein operates within lipid metabolism; fatty acid beta-oxidation. Functionally, key enzyme of fatty acid beta-oxidation. Able to isomerize both 3-cis (3Z) and 3-trans (3E) double bonds into the 2-trans (2E) form in a range of enoyl-CoA species, with a preference for (3Z)-enoyl-CoAs over (3E)-enoyl-CoAs. The catalytic efficiency of this enzyme is not affected by the fatty acyl chain length. The sequence is that of Enoyl-CoA delta isomerase 1, mitochondrial from Rattus norvegicus (Rat).